Here is a 532-residue protein sequence, read N- to C-terminus: Membrane protein insertase YidC (532 aa).

Transmembrane regions (helical) follow at residues 7 to 27, 336 to 356, 413 to 433, 450 to 470, and 492 to 512; these read FFIF…QSQM, LTIL…ITFI, GGFL…YMLI, LSSQ…MFFI, and PVIF…YYII.

This sequence belongs to the OXA1/ALB3/YidC family. Type 1 subfamily. In terms of assembly, interacts with the Sec translocase complex via SecD. Specifically interacts with transmembrane segments of nascent integral membrane proteins during membrane integration.

Its subcellular location is the cell membrane. Functionally, required for the insertion and/or proper folding and/or complex formation of integral membrane proteins into the membrane. Involved in integration of membrane proteins that insert both dependently and independently of the Sec translocase complex, as well as at least some lipoproteins. Aids folding of multispanning membrane proteins. The protein is Membrane protein insertase YidC of Buchnera aphidicola subsp. Acyrthosiphon pisum (strain APS) (Acyrthosiphon pisum symbiotic bacterium).